A 371-amino-acid polypeptide reads, in one-letter code: 4-hydroxy-3-methylbut-2-en-1-yl diphosphate synthase (flavodoxin) (371 aa).

[4Fe-4S] cluster contacts are provided by Cys270, Cys273, Cys305, and Glu312.

Belongs to the IspG family. It depends on [4Fe-4S] cluster as a cofactor.

The enzyme catalyses (2E)-4-hydroxy-3-methylbut-2-enyl diphosphate + oxidized [flavodoxin] + H2O + 2 H(+) = 2-C-methyl-D-erythritol 2,4-cyclic diphosphate + reduced [flavodoxin]. Its pathway is isoprenoid biosynthesis; isopentenyl diphosphate biosynthesis via DXP pathway; isopentenyl diphosphate from 1-deoxy-D-xylulose 5-phosphate: step 5/6. Functionally, converts 2C-methyl-D-erythritol 2,4-cyclodiphosphate (ME-2,4cPP) into 1-hydroxy-2-methyl-2-(E)-butenyl 4-diphosphate. This is 4-hydroxy-3-methylbut-2-en-1-yl diphosphate synthase (flavodoxin) from Shewanella baltica (strain OS223).